The sequence spans 520 residues: Cytochrome P450 4F8 (520 aa).

The chain crosses the membrane as a helical span at residues 15-37; that stretch reads AASPWLLLLVVGASWLLARILAW. Residue Cys-468 participates in heme binding.

This sequence belongs to the cytochrome P450 family. Requires heme as cofactor. As to expression, expressed in the epithelium of seminal vesicles, in renal cortex, in adult and fetal liver, in epidermis, in corneal epithelium, in sweat glands, hair follicles, epithelial linings of the ampulla of vas deferens and of the stomach and small intestine, as well as in the transitional epithelium of the bladder and ureter (at protein level). In the epidermis, expressed from the basal cell to the granular cell layers. In the corneal epithelium, expressed in all cell layers. Also detected in prostate. Up-regulated in the epidermis of psoriatic lesions.

The protein resides in the endoplasmic reticulum membrane. It is found in the microsome membrane. It catalyses the reaction an organic molecule + reduced [NADPH--hemoprotein reductase] + O2 = an alcohol + oxidized [NADPH--hemoprotein reductase] + H2O + H(+). The enzyme catalyses (5Z,8Z,11Z,14Z)-eicosatetraenoate + reduced [NADPH--hemoprotein reductase] + O2 = (18R)-hydroxy-(5Z,8Z,11Z,14Z)-eicosatetraenoate + oxidized [NADPH--hemoprotein reductase] + H2O + H(+). The catalysed reaction is (4Z,7Z,10Z,13Z,16Z)-docosapentaenoate + reduced [NADPH--hemoprotein reductase] + O2 = 20-hydroxy-(4Z,7Z,10Z,13Z,16Z)-docosapentaenoate + oxidized [NADPH--hemoprotein reductase] + H2O + H(+). It carries out the reaction prostaglandin H1 + reduced [NADPH--hemoprotein reductase] + O2 = 19-hydroxyprostaglandin H1 + oxidized [NADPH--hemoprotein reductase] + H2O + H(+). It catalyses the reaction prostaglandin H2 + reduced [NADPH--hemoprotein reductase] + O2 = 19-hydroxyprostaglandin H2 + oxidized [NADPH--hemoprotein reductase] + H2O + H(+). The enzyme catalyses prostaglandin I2 + reduced [NADPH--hemoprotein reductase] + O2 = 19-hydroxy-prostaglandin I2 + oxidized [NADPH--hemoprotein reductase] + H2O + H(+). The catalysed reaction is (4Z,7Z,10Z,13Z,16Z,19Z)-docosahexaenoate + reduced [NADPH--hemoprotein reductase] + O2 = 10,11-epoxy-(4Z,7Z,13Z,16Z,19Z)-docosapentaenoate + oxidized [NADPH--hemoprotein reductase] + H2O + H(+). It carries out the reaction (4Z,7Z,10Z,13Z,16Z,19Z)-docosahexaenoate + reduced [NADPH--hemoprotein reductase] + O2 = 13,14-epoxy-(4Z,7Z,10Z,16Z,19Z)-docosapentaenoate + oxidized [NADPH--hemoprotein reductase] + H2O + H(+). It catalyses the reaction (4Z,7Z,10Z,13Z,16Z,19Z)-docosahexaenoate + reduced [NADPH--hemoprotein reductase] + O2 = 16,17-epoxy-(4Z,7Z,10Z,13Z,19Z)-docosapentaenoate + oxidized [NADPH--hemoprotein reductase] + H2O + H(+). The enzyme catalyses (4Z,7Z,10Z,13Z,16Z,19Z)-docosahexaenoate + reduced [NADPH--hemoprotein reductase] + O2 = 19,20-epoxy-(4Z,7Z,10Z,13Z,16Z)-docosapentaenoate + oxidized [NADPH--hemoprotein reductase] + H2O + H(+). The catalysed reaction is (7Z,10Z,13Z,16Z,19Z)-docosapentaenoate + reduced [NADPH--hemoprotein reductase] + O2 = 10,11-epoxy-(7Z,13Z,16Z,19Z)-docosatetraenoate + oxidized [NADPH--hemoprotein reductase] + H2O + H(+). It carries out the reaction (7Z,10Z,13Z,16Z,19Z)-docosapentaenoate + reduced [NADPH--hemoprotein reductase] + O2 = 13,14-epoxy-(7Z,10Z,16Z,19Z)-docosatetraenoate + oxidized [NADPH--hemoprotein reductase] + H2O + H(+). It catalyses the reaction (7Z,10Z,13Z,16Z,19Z)-docosapentaenoate + reduced [NADPH--hemoprotein reductase] + O2 = 16,17-epoxy-(7Z,10Z,13Z,19Z)-docosatetraenoate + oxidized [NADPH--hemoprotein reductase] + H2O + H(+). The enzyme catalyses (7Z,10Z,13Z,16Z,19Z)-docosapentaenoate + reduced [NADPH--hemoprotein reductase] + O2 = 19,20-epoxy-(7Z,10Z,13Z,16Z)-docosatetraenoate + oxidized [NADPH--hemoprotein reductase] + H2O + H(+). It participates in lipid metabolism; fatty acid metabolism. In terms of biological role, a cytochrome P450 monooxygenase involved in the metabolism of endogenous polyunsaturated fatty acids (PUFAs) and their oxygenated derivatives (oxylipins). Mechanistically, uses molecular oxygen inserting one oxygen atom into a substrate, and reducing the second into a water molecule, with two electrons provided by NADPH via cytochrome P450 reductase (CPR; NADPH-ferrihemoprotein reductase). Catalyzes the hydroxylation of carbon hydrogen bonds, with preference for omega-1 and omega-2 positions. Hydroxylates (5Z,8Z,11Z,14Z)-eicosatetraenoic acid (arachidonate) predominantly at omega-2 position to form (18R)-hydroxyeicosatetraenoic acid (18R-HETE). Exhibits omega-1 hydroxylase activity toward prostaglandin (PG) H1, PGH2 and PGI2. Catalyzes the epoxidation of double bonds of PUFAs, including docosahexaenoic and docosapentaenoic acids. Shows little activity against PGD2, PGE1, PGE2, PGF2alpha, and leukotriene B4. The protein is Cytochrome P450 4F8 of Homo sapiens (Human).